Here is a 2351-residue protein sequence, read N- to C-terminus: Coagulation factor VIII (2351 aa).

Residues 1–19 (MQIELSTCFFLCLLRFCFS) form the signal peptide. Plastocyanin-like domains lie at 20–198 (ATRR…LLVC) and 206–348 (EKTQ…VDSC). Residues 20–348 (ATRRYYLGAV…MEAYVKVDSC (329 aa)) enclose the F5/8 type A 1 domain. N-linked (GlcNAc...) asparagine glycosylation occurs at Asn-60. Cys-172 and Cys-198 form a disulfide bridge. N-linked (GlcNAc...) asparagine glycosylation occurs at Asn-258. A disulfide bond links Cys-267 and Cys-348. Residue Tyr-365 is modified to Sulfotyrosine. Plastocyanin-like domains follow at residues 399–573 (KTWV…LLIC) and 583–730 (NQIM…VSSC). One can recognise an F5/8 type A 2 domain in the interval 399–730 (KTWVHYIAAE…MTALLKVSSC (332 aa)). A disulfide bridge connects residues Cys-547 and Cys-573. A glycan (N-linked (GlcNAc...) asparagine) is linked at Asn-601. A disulfide bond links Cys-649 and Cys-730. Residues Tyr-737, Tyr-738, and Tyr-742 each carry the sulfotyrosine modification. Residues 760–1667 (SFSQNSRHPS…NPPVLKRHQR (908 aa)) form a b region. N-linked (GlcNAc...) asparagine glycosylation is found at Asn-776, Asn-803, Asn-847, and Asn-919. Disordered regions lie at residues 906 to 928 (STIP…PPSM) and 941 to 961 (FGKK…SEEN). 13 N-linked (GlcNAc...) asparagine glycosylation sites follow: Asn-962, Asn-982, Asn-1020, Asn-1024, Asn-1074, Asn-1085, Asn-1204, Asn-1274, Asn-1278, Asn-1301, Asn-1319, Asn-1431, and Asn-1461. Sulfotyrosine occurs at positions 1683 and 1699. Plastocyanin-like domains are found at residues 1713–1877 (KTRH…LLVC) and 1887–2040 (GRQV…SNKC). An F5/8 type A 3 domain is found at 1713-2040 (KTRHYFIAAV…TLFLVYSNKC (328 aa)). Residue Asn-1829 is glycosylated (N-linked (GlcNAc...) asparagine). Cystine bridges form between Cys-1851–Cys-1877, Cys-1918–Cys-1922, Cys-2040–Cys-2188, and Cys-2193–Cys-2345. F5/8 type C domains follow at residues 2040 to 2188 (CQTP…LMGC) and 2193 to 2345 (CSMP…VLGC). An N-linked (GlcNAc...) asparagine glycan is attached at Asn-2137.

This sequence belongs to the multicopper oxidase family. Interacts with VWF/vWF. vWF binding is essential for the stabilization of F8 in circulation. Post-translationally, sulfation on Tyr-1699 is essential for binding vWF. Proteolytically cleaved by cathepsin CTSG to produce a partially activated form.

Its subcellular location is the secreted. The protein localises to the extracellular space. Functionally, factor VIII, along with calcium and phospholipid, acts as a cofactor for F9/factor IXa when it converts F10/factor X to the activated form, factor Xa. The chain is Coagulation factor VIII (F8) from Homo sapiens (Human).